A 1239-amino-acid chain; its full sequence is Potassium channel subfamily T member 1 (1239 aa).

The disordered stretch occupies residues 1–45; the sequence is MARAKLPRSPSEGKAGPGDTPAGSAAPEEPHGLSPLLPTRGGGSV. Residues 1–93 are Cytoplasmic-facing; it reads MARAKLPRSP…LFFIKNQRSS (93 aa). A helical transmembrane segment spans residues 94–126; sequence LRIRLFNFSLKLLTCLLYIVRVLLDNPDQGIGC. Over 127–153 the chain is Extracellular; that stretch reads WGCTKYNYTFNGSSSEFHWAPILWVER. Residues Asn-133 and Asn-137 are each glycosylated (N-linked (GlcNAc...) asparagine). A helical membrane pass occupies residues 154-178; the sequence is KMALWVIQVIVATISFLETMLLIYL. At 179–192 the chain is on the cytoplasmic side; that stretch reads SYKGNIWEQIFHVS. A helical membrane pass occupies residues 193–208; it reads FVLEMINTLPFIITVF. The Extracellular segment spans residues 209–215; sequence WPPLRNL. Residues 216–233 form a helical membrane-spanning segment; sequence FIPVFLNCWLAKHALENM. Residues 234 to 246 are Cytoplasmic-facing; the sequence is INDFHRAILRTQS. A helical membrane pass occupies residues 247–274; the sequence is AMFNQVLILFCTLLCLVFTGTCGIQHLE. Topologically, residues 275 to 281 are extracellular; that stretch reads RAGGNLN. The segment at residues 282-302 is an intramembrane region (pore-forming); it reads LLTSFYFCIVTFSTVGFGDVT. Val-296 and Gly-297 together coordinate K(+). At 303–304 the chain is on the extracellular side; sequence PK. The helical transmembrane segment at 305-338 threads the bilayer; it reads IWPSQLLVVILICVTLVVLPLQFEELVYLWMERQ. Residues 339–1239 lie on the Cytoplasmic side of the membrane; sequence KSGGNYSRHR…NPETRDETQL (901 aa). The RCK N-terminal 1 domain maps to 352–488; the sequence is EKHVVLCVSS…FHVKFADHVV (137 aa). Na(+) contacts are provided by Leu-513, His-516, Ser-538, and Asn-540. The tract at residues 658-689 is disordered; the sequence is QNTDCRPSQGGSGGGGGKLTLPTENGSGSRRP. Cys-758 and Cys-759 together coordinate Zn(2+). Positions 761 and 764 each coordinate K(+). Residues Arg-761 and Lys-764 each coordinate Na(+). Cys-766 and His-768 together coordinate Zn(2+). Positions 769, 771, 777, and 778 each coordinate K(+). Tyr-771 serves as a coordination point for Na(+). Position 779 (Phe-779) interacts with Na(+). In terms of domain architecture, RCK N-terminal 2 spans 781 to 921; it reads NKLIIVSAET…QFRAKDSYSL (141 aa). K(+) is bound by residues Ser-787, Leu-818, Asp-820, Gly-842, and Asp-865. Disordered stretches follow at residues 1053–1081 and 1212–1239; these read REAK…ADPV and TSSS…ETQL. The segment covering 1213–1230 has biased composition (low complexity); the sequence is SSSQSRKSSCSNKLSSCN.

This sequence belongs to the potassium channel family. Calcium-activated (TC 1.A.1.3) subfamily. KCa4.1/KCNT1 sub-subfamily. In terms of assembly, homotetramer; which constitutes the Na(+)-activated K(+) channel. Interacts with KCNT2; these heterodimer channels differ from the homomers in their unitary conductance, kinetic behavior, subcellular localization, and response to activation of protein kinase C. Interacts (via C-terminus) with FMR1; this interaction alters gating properties of KCNT1. Interacts with CRBN via its cytoplasmic C-terminus. Does not interact with KCNT2. In terms of processing, phosphorylated by protein kinase C. Phosphorylation of the C-terminal domain increases channel activity. In terms of tissue distribution, detected in brain and brainstem, in vestibular and oculomotor nuclei, the medial nucleus of the trapezoid in the auditory system, in olfactory bulb, red nucleus, and deep cerebellar nuclei. Detected in thalamus, substantia nigra, and amygdala (at protein level). Highly expressed in the brain and kidney.

The protein resides in the cell membrane. It carries out the reaction K(+)(in) = K(+)(out). Its activity is regulated as follows. Activated by high intracellular Na(+) level. In addition to activation by Na(+), is cooperatively activated by intracellular Cl(-) levels. Activated upon stimulation of G-protein coupled receptors, such as CHRM1 and GRIA1. Functionally, sodium-activated K(+) channel. Acts as an important mediator of neuronal membrane excitability. Contributes to the delayed outward currents. Regulates neuronal bursting in sensory neurons. Contributes to synaptic development and plasticity. The protein is Potassium channel subfamily T member 1 (Kcnt1) of Rattus norvegicus (Rat).